The sequence spans 40 residues: uncharacterized protein (40 aa).

Residues methionine 1–alanine 17 form the signal peptide.

This is an uncharacterized protein from Archaeoglobus fulgidus (strain ATCC 49558 / DSM 4304 / JCM 9628 / NBRC 100126 / VC-16).